The sequence spans 94 residues: MPKLAVVLLVLLILPLSYFDAAGGQVVQGDRRGNGLARYLQRGDRDVRECQVNTPGSSWGKCCMTRMCGTMCCARSGCTCVYHWRRGHGCSCPG.

An N-terminal signal peptide occupies residues 1–24 (MPKLAVVLLVLLILPLSYFDAAGG). Positions 25-45 (QVVQGDRRGNGLARYLQRGDR) are excised as a propeptide. Glutamate 49 carries the 4-carboxyglutamate modification. Proline 55 is subject to 4-hydroxyproline. Cystine bridges form between cysteine 63/cysteine 72, cysteine 68/cysteine 80, cysteine 73/cysteine 90, and cysteine 78/cysteine 92.

This sequence belongs to the conotoxin D superfamily. In terms of assembly, hetero-, homo- or pseudo-homodimer (identical sequence, different post-translational modifications). Homodimer of [carboxyGlu-49, hydroxyPro-55]Ms20.3, and heterodimer of [carboxyGlu-49, hydroxyPro-55]Ms20.3 and [carboxy'Glu-50', hydroxy'Pro-56']Ms20.5 may exist. As to expression, expressed by the venom duct.

The protein resides in the secreted. Functionally, alpha-D-conopeptides act on postsynaptic membranes, they bind to the nicotinic acetylcholine receptors (nAChR) and thus inhibit them. Through its two C-terminal domains, this homodimeric protein would bind to two nAChR allosteric sites, located outside the nAChR C-loop of the principal binding face and at the adjacent binding interface in a clockwise direction. This toxin specifically blocks mammalian neuronal nAChR of the alpha-7/CHRNA7 (IC(50)=0.12 nM), alpha-3-beta-2/CHRNA3-CHRNB2 (IC(50)=1.08 nM), and alpha-4-beta-2/CHRNA4-CHRNB2 (IC(50)=4.5 nM) subtypes. Has no effect on alpha-3-beta-4/CHRNA3-CHRNB4, alpha-4-beta-4/CHRNA4-CHRNB4 and alpha-1-beta-1-epsilon-delta/CHRNA1-CHRNB1-CHRNE-CHRND subtypes of nAChRs. The polypeptide is Alpha-conotoxin Ms20.3 (Conus mustelinus (Weasel cone)).